A 673-amino-acid chain; its full sequence is Xaa-Pro aminopeptidase 2 (673 aa).

A signal peptide spans 1–21 (MAQACWGCYPWLVLICACAWG). N-linked (GlcNAc...) asparagine glycans are attached at residues asparagine 34, asparagine 48, and asparagine 64. A substrate-binding site is contributed by arginine 115. Asparagine 277, asparagine 290, and asparagine 294 each carry an N-linked (GlcNAc...) asparagine glycan. Histidine 429 is a binding site for substrate. Aspartate 449 serves as a coordination point for Mn(2+). Zn(2+) is bound by residues aspartate 449, aspartate 460, and histidine 523. 3 residues coordinate substrate: histidine 523, histidine 532, and glutamate 554. Residues glutamate 554 and glutamate 568 each coordinate Zn(2+). The GPI-anchor amidated alanine moiety is linked to residue alanine 649. A propeptide spans 650-673 (RAAPTTSLGSLMTVSALAILGWSV) (removed in mature form).

It belongs to the peptidase M24B family. In terms of assembly, homotrimer. The cofactor is Zn(2+). Post-translationally, N-glycosylated. In terms of tissue distribution, kidney.

It is found in the cell membrane. It carries out the reaction Release of any N-terminal amino acid, including proline, that is linked to proline, even from a dipeptide or tripeptide.. Inhibited by apstatin and the metal ion chelator EDTA. Potently inhibited by the converting enzyme inhibitors cilazaprilat; enalaprilat; L155,212; ramiprilat and YS 980. Also inhibited to a lesser extent by indolaprilat; quinaprilat; spiraprilat; captopril and zofenoprilat. Its function is as follows. Membrane-bound metalloprotease which catalyzes the removal of a penultimate prolyl residue from the N-termini of peptides, such as Arg-Pro-Pro. May play a role in the metabolism of the vasodilator bradykinin. This Sus scrofa (Pig) protein is Xaa-Pro aminopeptidase 2 (XPNPEP2).